Consider the following 610-residue polypeptide: Threonine--tRNA ligase (610 aa).

A disordered region spans residues 1–29; it reads MANHDQQTVSSAAATTSASPSPVVLPKTS. Positions 8–24 are enriched in low complexity; sequence TVSSAAATTSASPSPVV. A catalytic region spans residues 209 to 502; the sequence is DHRRIGKDLD…MTENYAGDYP (294 aa). Zn(2+) is bound by residues cysteine 302, histidine 353, and histidine 479.

It belongs to the class-II aminoacyl-tRNA synthetase family. As to quaternary structure, homodimer. Zn(2+) is required as a cofactor.

The protein resides in the cytoplasm. It catalyses the reaction tRNA(Thr) + L-threonine + ATP = L-threonyl-tRNA(Thr) + AMP + diphosphate + H(+). Its function is as follows. Catalyzes the attachment of threonine to tRNA(Thr) in a two-step reaction: L-threonine is first activated by ATP to form Thr-AMP and then transferred to the acceptor end of tRNA(Thr). Also edits incorrectly charged L-seryl-tRNA(Thr). The protein is Threonine--tRNA ligase of Synechococcus sp. (strain WH7803).